A 164-amino-acid chain; its full sequence is Phospholipase A and acyltransferase 4 (164 aa).

The tract at residues 1–40 is essential for its ability regulate keratinocyte differentiation; it reads MASPHQEPKPGDLIEIFRLGYEHWALYIGDGYVIHLAPPS. Over 1 to 134 the chain is Cytoplasmic; it reads MASPHQEPKP…SRCKQVEKAK (134 aa). The LRAT domain maps to 13–129; it reads LIEIFRLGYE…LRYGKSRCKQ (117 aa). Residues histidine 23 and histidine 35 contribute to the active site. The active-site Acyl-thioester intermediate is cysteine 113. Residues 124–164 are interaction with TGM1; that stretch reads KSRCKQVEKAKVEVGVATALGILVVAGCSFAIRRYQKKATA. Residues 135-155 form a helical membrane-spanning segment; that stretch reads VEVGVATALGILVVAGCSFAI. At 156–164 the chain is on the lumenal side; that stretch reads RRYQKKATA.

Belongs to the H-rev107 family. In terms of assembly, interacts with TGM1. In terms of tissue distribution, widely expressed.

The protein resides in the membrane. It catalyses the reaction a 1,2-diacyl-sn-glycero-3-phosphocholine + H2O = a 1-acyl-sn-glycero-3-phosphocholine + a fatty acid + H(+). The enzyme catalyses a 1,2-diacyl-sn-glycero-3-phosphocholine + H2O = a 2-acyl-sn-glycero-3-phosphocholine + a fatty acid + H(+). It carries out the reaction 1,2-dihexadecanoyl-sn-glycero-3-phosphocholine + H2O = 1-hexadecanoyl-sn-glycero-3-phosphocholine + hexadecanoate + H(+). The catalysed reaction is 1,2-dihexadecanoyl-sn-glycero-3-phosphocholine + H2O = 2-hexadecanoyl-sn-glycero-3-phosphocholine + hexadecanoate + H(+). It catalyses the reaction 1-hexadecanoyl-2-(9Z-octadecenoyl)-sn-glycero-3-phosphocholine + H2O = 2-(9Z-octadecenoyl)-sn-glycero-3-phosphocholine + hexadecanoate + H(+). The enzyme catalyses 1-hexadecanoyl-2-(9Z-octadecenoyl)-sn-glycero-3-phosphocholine + H2O = 1-hexadecanoyl-sn-glycero-3-phosphocholine + (9Z)-octadecenoate + H(+). It carries out the reaction 1-hexadecanoyl-2-(5Z,8Z,11Z,14Z-eicosatetraenoyl)-sn-glycero-3-phosphocholine + H2O = 2-(5Z,8Z,11Z,14Z)-eicosatetraenoyl-sn-glycero-3-phosphocholine + hexadecanoate + H(+). The catalysed reaction is 1-hexadecanoyl-2-(9Z,12Z-octadecadienoyl)-sn-glycero-3-phosphoethanolamine + H2O = 1-hexadecanoyl-sn-glycero-3-phosphoethanolamine + (9Z,12Z)-octadecadienoate + H(+). It catalyses the reaction 1-hexadecanoyl-2-(9Z,12Z-octadecadienoyl)-sn-glycero-3-phosphoethanolamine + H2O = 2-(9Z,12Z)-octadecadienoyl-sn-glycero-3-phosphoethanolamine + hexadecanoate + H(+). The enzyme catalyses 1-hexadecanoyl-2-(5Z,8Z,11Z,14Z-eicosatetraenoyl)-sn-glycero-3-phosphoethanolamine + H2O = 2-(5Z,8Z,11Z,14Z)-eicosatetraenoyl-sn-glycero-3-phosphoethanolamine + hexadecanoate + H(+). It carries out the reaction 1-hexanoyl-2-acyl-sn-glycero-3-phosphocholine + H2O = hexanoate + a 2-acyl-sn-glycero-3-phosphocholine + H(+). The catalysed reaction is 1,2-diheptadecanoyl-sn-glycero-3-phosphoethanolamine + 1-(9Z-octadecenoyl)-2-hexadecanoyl-sn-glycero-3-phosphocholine = 1,2-diheptadecanoyl-sn-glycero-3-phospho-N-hexadecanoyl-ethanolamine + 1-(9Z-octadecenoyl)-sn-glycero-3-phosphocholine + H(+). It catalyses the reaction 1,2-diheptadecanoyl-sn-glycero-3-phosphoethanolamine + 1-(9Z-octadecenoyl)-2-hexadecanoyl-sn-glycero-3-phosphocholine = 1,2-diheptadecanoyl-sn-glycero-3-phospho-N-(9Z-octadecenoyl)-ethanolamine + 2-hexadecanoyl-sn-glycero-3-phosphocholine + H(+). In terms of biological role, exhibits both phospholipase A1/2 and acyltransferase activities. Shows phospholipase A1 (PLA1) and A2 (PLA2), catalyzing the calcium-independent release of fatty acids from the sn-1 or sn-2 position of glycerophospholipids. For most substrates, PLA1 activity is much higher than PLA2 activity. Shows O-acyltransferase activity, catalyzing the transfer of a fatty acyl group from glycerophospholipid to the hydroxyl group of lysophospholipid. Shows N-acyltransferase activity, catalyzing the calcium-independent transfer of a fatty acyl group at the sn-1 position of phosphatidylcholine (PC) and other glycerophospholipids to the primary amine of phosphatidylethanolamine (PE), forming N-acylphosphatidylethanolamine (NAPE), which serves as precursor for N-acylethanolamines (NAEs). Promotes keratinocyte differentiation via activation of TGM1. This chain is Phospholipase A and acyltransferase 4, found in Homo sapiens (Human).